Reading from the N-terminus, the 231-residue chain is Lipoprotein-releasing system ATP-binding protein LolD (231 aa).

Residues 11–231 (LQAEHLGKVY…HMENGRLQPD (221 aa)) form the ABC transporter domain. Position 47–54 (47–54 (GASGSGKS)) interacts with ATP.

This sequence belongs to the ABC transporter superfamily. Lipoprotein translocase (TC 3.A.1.125) family. As to quaternary structure, the complex is composed of two ATP-binding proteins (LolD) and two transmembrane proteins (LolC and LolE).

The protein resides in the cell inner membrane. In terms of biological role, part of the ABC transporter complex LolCDE involved in the translocation of mature outer membrane-directed lipoproteins, from the inner membrane to the periplasmic chaperone, LolA. Responsible for the formation of the LolA-lipoprotein complex in an ATP-dependent manner. This chain is Lipoprotein-releasing system ATP-binding protein LolD, found in Bordetella bronchiseptica (strain ATCC BAA-588 / NCTC 13252 / RB50) (Alcaligenes bronchisepticus).